The sequence spans 119 residues: HTH-type transcriptional regulator SarX (119 aa).

A DNA-binding region (H-T-H motif) is located at residues 55–78 (LKTAMDELDLSRTKLLVSIRRLIE).

Belongs to the SarA family.

The protein localises to the cytoplasm. Its function is as follows. Involved in the regulation of virulence genes. Acts as a repressor of the agr locus and consequently targets genes regulated by the agr system such as sspA, hla and hlb. Binds directly to the agr promoter region. The polypeptide is HTH-type transcriptional regulator SarX (sarX) (Staphylococcus aureus (strain bovine RF122 / ET3-1)).